A 208-amino-acid polypeptide reads, in one-letter code: Small ribosomal subunit protein uS4 (208 aa).

The S4 RNA-binding domain maps to 98 to 163 (QRLDNVVYRM…NPQITRAIEL (66 aa)).

Belongs to the universal ribosomal protein uS4 family. In terms of assembly, part of the 30S ribosomal subunit. Contacts protein S5. The interaction surface between S4 and S5 is involved in control of translational fidelity.

In terms of biological role, one of the primary rRNA binding proteins, it binds directly to 16S rRNA where it nucleates assembly of the body of the 30S subunit. With S5 and S12 plays an important role in translational accuracy. This chain is Small ribosomal subunit protein uS4, found in Campylobacter jejuni subsp. jejuni serotype O:6 (strain 81116 / NCTC 11828).